The chain runs to 48 residues: uncharacterized protein (48 aa).

Residues Met1–Ala21 form the signal peptide.

This is an uncharacterized protein from Bacillus anthracis.